We begin with the raw amino-acid sequence, 281 residues long: Probable endonuclease 4 (281 aa).

Zn(2+) contacts are provided by His69, His109, Glu145, Asp179, His182, His216, Asp229, His231, and Glu261.

Belongs to the AP endonuclease 2 family. Zn(2+) serves as cofactor.

The enzyme catalyses Endonucleolytic cleavage to 5'-phosphooligonucleotide end-products.. Endonuclease IV plays a role in DNA repair. It cleaves phosphodiester bonds at apurinic or apyrimidinic (AP) sites, generating a 3'-hydroxyl group and a 5'-terminal sugar phosphate. In Pectobacterium atrosepticum (strain SCRI 1043 / ATCC BAA-672) (Erwinia carotovora subsp. atroseptica), this protein is Probable endonuclease 4.